The sequence spans 122 residues: Ribosome-binding factor A (122 aa).

Belongs to the RbfA family. Monomer. Binds 30S ribosomal subunits, but not 50S ribosomal subunits or 70S ribosomes.

It localises to the cytoplasm. In terms of biological role, one of several proteins that assist in the late maturation steps of the functional core of the 30S ribosomal subunit. Associates with free 30S ribosomal subunits (but not with 30S subunits that are part of 70S ribosomes or polysomes). Required for efficient processing of 16S rRNA. May interact with the 5'-terminal helix region of 16S rRNA. The chain is Ribosome-binding factor A from Moorella thermoacetica (strain ATCC 39073 / JCM 9320).